A 293-amino-acid chain; its full sequence is Putative ribose uptake protein RbsU (293 aa).

The next 10 membrane-spanning stretches (helical) occupy residues 5–24 (AILIGLGPLLGWGLFPTIAS), 34–51 (IFGATVGTLIFAIVLALF), 58–80 (GGMALVFSLISGAGWAFGQIITF), 95–114 (TTAFQLLGASLWGVFALGNW), 121–138 (IIGFLALLVILIGARMTV), 153–170 (SAVILLLVGEIGYWIYSA), 177–199 (IGGFKAFLPQAIGMVIVAVIYAL), 212–234 (VSWQQTISGFFFAFAALTYLISA), 241–263 (LATGFVLSQTSVVLATLTGIFFL), and 273–292 (MITIVGLVLILVAASITVFI).

It belongs to the GRP transporter (TC 2.A.7.5) family.

Its subcellular location is the cell membrane. Its function is as follows. Could be involved in the uptake of ribose. This is Putative ribose uptake protein RbsU (rbsU) from Staphylococcus epidermidis (strain ATCC 35984 / DSM 28319 / BCRC 17069 / CCUG 31568 / BM 3577 / RP62A).